We begin with the raw amino-acid sequence, 661 residues long: L-type lectin-domain containing receptor kinase V.5 (661 aa).

The first 25 residues, 1–25 (MSRELIILCQPILVLFLTLFYNSHG), serve as a signal peptide directing secretion. At 26 to 282 (YFVSQGSVGI…KTSNRTKTVL (257 aa)) the chain is on the extracellular side. The segment at 30–250 (QGSVGIGFNG…GAIHYLMGWL (221 aa)) is legume-lectin like. N-linked (GlcNAc...) asparagine glycans are attached at residues asparagine 45, asparagine 64, asparagine 116, asparagine 198, and asparagine 276. Residues 283-303 (AVCLTVSVFAAFVASWIGFVF) form a helical membrane-spanning segment. Over 304–661 (YLRHKKVKEV…TDSSFVSHGR (358 aa)) the chain is Cytoplasmic. The region spanning 338–596 (FKEKQLLGKG…LGVLCSHQAA (259 aa)) is the Protein kinase domain. Residues 344–352 (LGKGGFGQV) and lysine 367 each bind ATP. Aspartate 464 functions as the Proton acceptor in the catalytic mechanism.

The protein in the C-terminal section; belongs to the protein kinase superfamily. Ser/Thr protein kinase family. In the N-terminal section; belongs to the leguminous lectin family. In terms of processing, autophosphorylated on a Ser residue. As to expression, expressed at low levels in stems, leaves, flowers and siliques.

It is found in the cell membrane. The catalysed reaction is L-seryl-[protein] + ATP = O-phospho-L-seryl-[protein] + ADP + H(+). It catalyses the reaction L-threonyl-[protein] + ATP = O-phospho-L-threonyl-[protein] + ADP + H(+). Confers resistance to the pathogenic oomycetes Phytophthora infestans and Phytophthora capsici, but confers susceptibility to the pathogenic bacteria Pseudomonas syringae. This Arabidopsis thaliana (Mouse-ear cress) protein is L-type lectin-domain containing receptor kinase V.5.